Reading from the N-terminus, the 375-residue chain is Alcohol dehydrogenase 1 (375 aa).

S2 bears the N-acetylserine mark. Positions 47, 68, 98, 101, 104, 112, and 175 each coordinate Zn(2+). NAD(+) contacts are provided by residues 200-205, D224, K229, 293-295, and R370; these read GLGGVG and LGV.

The protein belongs to the zinc-containing alcohol dehydrogenase family. Class-I subfamily. As to quaternary structure, homodimer. The cofactor is Zn(2+).

It is found in the cytoplasm. It catalyses the reaction a primary alcohol + NAD(+) = an aldehyde + NADH + H(+). The catalysed reaction is a secondary alcohol + NAD(+) = a ketone + NADH + H(+). In Apteryx australis (Southern brown kiwi), this protein is Alcohol dehydrogenase 1 (ADH1).